An 856-amino-acid polypeptide reads, in one-letter code: MSEARRDSTSSLQRKKPPWLKLDIPAVVPPAAEEPSFLQPLRRQAFLRSVSMPAETARVPSPHHEPRRLALQRQTSITQTIRRGTADWFGVSKDSDSTQKWQRKSIRHCSQRYGKLKPQVIRELDLPSQDNVSLTSTETPPPLYVGPCQLGMQKIIDPLARGRAFRMADDTADGLSAPHTPVTPGAASLCSFSSSRSGFNRLPRRRKRESVAKMSFRAAAALVKGRSIRDGTLRRGQRRSFTPASFLEEDMVDFPDELDTSFFAREGVLHEELSTYPDEVFESPSEAALKDWEKAPDQADLTGGALDRSELERSHLMLPLERGWRKQKEGGTLAPQPKVRLRQEVVSAAGPRRGQRIAVPVRKLFAREKRPYGLGMVGRLTNRTYRKRIDSYVKRQIEDMDDHRPFFTYWLTFVHSLVTILAVCIYGIAPVGFSQHETVDSVLRKRGVYENVKYVQQENFWIGPSSEALIHLGAKFSPCMRQDPQVHNFILAAREREKHSACCVRNDRSGCVQTSKEECSSTLAVWVKWPVHPSAPDLAGNKRQFGSVCHQDPRVCDEPSSEDPHEWPEDITKWPICTKNSAGNHTNHPHMDCVITGRPCCIGTKGRCEITSREYCDFMKGYFHEEATLCSQVHCMDDVCGLLPFLNPEVPDQFYRLWLSLFLHAGILHCLVSVCFQMTVLRDLEKLAGWHRIAIIYLLSGVTGNLASAIFLPYRAEVGPAGSQFGILACLFVELFQSWQILARPWRAFFKLLAVVLFLFAFGLLPWIDNFAHISGFVSGLFLSFAFLPYISFGKFDLYRKRCQIIIFQAVFLGLLAGLVVLFYFYPVRCEWCEFLTCIPFTDKFCEKYELDAQLH.

The disordered stretch occupies residues 1–20 (MSEARRDSTSSLQRKKPPWL). Topologically, residues 1-412 (MSEARRDSTS…HRPFFTYWLT (412 aa)) are cytoplasmic. A phosphoserine mark is found at Ser-76 and Ser-176. Phosphothreonine occurs at positions 180 and 183. The residue at position 391 (Ser-391) is a Phosphoserine. The chain crosses the membrane as a helical span at residues 413 to 433 (FVHSLVTILAVCIYGIAPVGF). Residues 434–656 (SQHETVDSVL…NPEVPDQFYR (223 aa)) lie on the Lumenal side of the membrane. Residue Asn-584 is glycosylated (N-linked (GlcNAc...) asparagine). The helical transmembrane segment at 657-677 (LWLSLFLHAGILHCLVSVCFQ) threads the bilayer. Residues 678–692 (MTVLRDLEKLAGWHR) lie on the Cytoplasmic side of the membrane. Residues 693–713 (IAIIYLLSGVTGNLASAIFLP) traverse the membrane as a helical segment. Residues 714–715 (YR) are Lumenal-facing. A helical transmembrane segment spans residues 716 to 736 (AEVGPAGSQFGILACLFVELF). Residues 737 to 747 (QSWQILARPWR) are Cytoplasmic-facing. Residues 748–768 (AFFKLLAVVLFLFAFGLLPWI) form a helical membrane-spanning segment. Over 769–773 (DNFAH) the chain is Lumenal. Residues 774-794 (ISGFVSGLFLSFAFLPYISFG) form a helical membrane-spanning segment. At 795–804 (KFDLYRKRCQ) the chain is on the cytoplasmic side. A helical membrane pass occupies residues 805-825 (IIIFQAVFLGLLAGLVVLFYF). The Lumenal segment spans residues 826 to 856 (YPVRCEWCEFLTCIPFTDKFCEKYELDAQLH).

Belongs to the peptidase S54 family. Homodimer, or homooligomer. Interacts with TGFA and HBEGF. Interacts with EGF; may retain EGF in the endoplasmic reticulum and regulates its degradation through the endoplasmic reticulum-associated degradation (ERAD). Interacts (via cytoplasmic N-terminus) with FRMD8/iTAP; this interaction leads to mutual protein stabilization. Interacts with ADAM17/TACE.

The protein localises to the endoplasmic reticulum membrane. The protein resides in the golgi apparatus membrane. Its function is as follows. Regulates ADAM17 protease, a sheddase of the epidermal growth factor (EGF) receptor ligands and TNF, thereby plays a role in sleep, cell survival, proliferation, migration and inflammation. Does not exhibit any protease activity on its own. This chain is Inactive rhomboid protein 1 (Rhbdf1), found in Rattus norvegicus (Rat).